The sequence spans 507 residues: MELSPRAAELTNLFESRIRNFYANFQVDEIGRVVSVGDGIAQVYGLNEIQAGEMVLFANGVKGMALNLENENVGIVVFGGDTAIKEGDLVKRTGSIVDVPAGKAMLGRVVDAMGVPIDGRGALSDHEQRRVEVKAPGILERKSVHEPMQTGLKAVDSLVPIGRGQRELLIGDRQTGKTTIAIDTILNQKQINSRATSESETMYCVYVAIGQKRSTVGQLIQTLEEANALEYSILVAATASDPAPLQFLAPYSGCAMGEYFRDNGMHALIIYDDLSKQAVAYRQMSLLLRRPPGREAFPGDVFYLHSRLLERAAKRSDQTGAGSLTALPVIETQAGDVSAYIPTNVISITDGQICLETELFYRGIRPAINVGLSVSRVGSAAQLKAMKQVCGSSKLELAQYREVAAFAQFGSDLDAATQALLNRGARLTEVPKQPQYAPLPIEKQILVIYAAVNGFCDRMPLDRISQYEKAIPNSVKPELLQALKGGLTNERKMEPDAFLKERALALI.

Residue 171 to 178 (GDRQTGKT) participates in ATP binding.

This sequence belongs to the ATPase alpha/beta chains family. In terms of assembly, F-type ATPases have 2 components, CF(1) - the catalytic core - and CF(0) - the membrane proton channel. CF(1) has five subunits: alpha(3), beta(3), gamma(1), delta(1), epsilon(1). CF(0) has three main subunits: a, b and c.

It localises to the mitochondrion. The protein resides in the mitochondrion inner membrane. Its function is as follows. Mitochondrial membrane ATP synthase (F(1)F(0) ATP synthase or Complex V) produces ATP from ADP in the presence of a proton gradient across the membrane which is generated by electron transport complexes of the respiratory chain. F-type ATPases consist of two structural domains, F(1) - containing the extramembraneous catalytic core, and F(0) - containing the membrane proton channel, linked together by a central stalk and a peripheral stalk. During catalysis, ATP synthesis in the catalytic domain of F(1) is coupled via a rotary mechanism of the central stalk subunits to proton translocation. Subunits alpha and beta form the catalytic core in F(1). Rotation of the central stalk against the surrounding alpha(3)beta(3) subunits leads to hydrolysis of ATP in three separate catalytic sites on the beta subunits. Subunit alpha does not bear the catalytic high-affinity ATP-binding sites. The protein is ATP synthase subunit alpha, mitochondrial (ATPA) of Raphanus sativus (Radish).